A 458-amino-acid chain; its full sequence is MSKKLWGGRFEKGTDKVVEDFHSSIRFDQRLYKQDIRGSIAHARMLGRQGIIAASEAEQIIEGLEKIMADIEAGRVEFDVAAEDIHMNIEKILTERIGDVGKKLHTGRSRNDQVALDVRLYLRDEITETGRLLRELITVLLERAEEHVDTIMPGYTHLQKAQPITLAHHLLAYVQMFGRDCSRLVDCAKRFNISPLGSGALAGTTFPLDRMAVAQELGFDGITENSLDGVSDRDFAIEFCGAASLIMMHLSRFCEEIILWSSQEFSFIELDDAYSTGSSMMPQKKNPDVAELIRGKTGRVYGDLMALLTVMKSLPLAYNKDMQEDKENLFDAVDTVKGCLAVFTPMIRTMRVRGERMKAGAKGGFTNATDVADYLAKKGVSFREAHEIVGKMVLMCVQKSVALEDLSFEDFRACSEAFEEDVFDAIRVERCVADRKVPGGPAPDAVKAAIQAARERLS.

This sequence belongs to the lyase 1 family. Argininosuccinate lyase subfamily.

The protein resides in the cytoplasm. The catalysed reaction is 2-(N(omega)-L-arginino)succinate = fumarate + L-arginine. It participates in amino-acid biosynthesis; L-arginine biosynthesis; L-arginine from L-ornithine and carbamoyl phosphate: step 3/3. The polypeptide is Argininosuccinate lyase (Heliobacterium mobile (Heliobacillus mobilis)).